A 178-amino-acid chain; its full sequence is Protein GrpE (178 aa).

The span at 1–11 (MENTQENPTDQ) shows a compositional bias: polar residues. The segment at 1 to 31 (MENTQENPTDQTTEETGREAQAAENAAPAAE) is disordered. Residues 19–31 (EAQAAENAAPAAE) show a composition bias toward low complexity.

This sequence belongs to the GrpE family. As to quaternary structure, homodimer.

It localises to the cytoplasm. Participates actively in the response to hyperosmotic and heat shock by preventing the aggregation of stress-denatured proteins, in association with DnaK and GrpE. It is the nucleotide exchange factor for DnaK and may function as a thermosensor. Unfolded proteins bind initially to DnaJ; upon interaction with the DnaJ-bound protein, DnaK hydrolyzes its bound ATP, resulting in the formation of a stable complex. GrpE releases ADP from DnaK; ATP binding to DnaK triggers the release of the substrate protein, thus completing the reaction cycle. Several rounds of ATP-dependent interactions between DnaJ, DnaK and GrpE are required for fully efficient folding. This is Protein GrpE from Burkholderia thailandensis (strain ATCC 700388 / DSM 13276 / CCUG 48851 / CIP 106301 / E264).